Here is a 241-residue protein sequence, read N- to C-terminus: Phosphoribosyl isomerase A (241 aa).

Catalysis depends on D11, which acts as the Proton acceptor. The Proton donor role is filled by D130.

The protein belongs to the HisA/HisF family.

Its subcellular location is the cytoplasm. The catalysed reaction is 1-(5-phospho-beta-D-ribosyl)-5-[(5-phospho-beta-D-ribosylamino)methylideneamino]imidazole-4-carboxamide = 5-[(5-phospho-1-deoxy-D-ribulos-1-ylimino)methylamino]-1-(5-phospho-beta-D-ribosyl)imidazole-4-carboxamide. It carries out the reaction N-(5-phospho-beta-D-ribosyl)anthranilate = 1-(2-carboxyphenylamino)-1-deoxy-D-ribulose 5-phosphate. It participates in amino-acid biosynthesis; L-histidine biosynthesis; L-histidine from 5-phospho-alpha-D-ribose 1-diphosphate: step 4/9. Its pathway is amino-acid biosynthesis; L-tryptophan biosynthesis; L-tryptophan from chorismate: step 3/5. In terms of biological role, involved in both the histidine and tryptophan biosynthetic pathways. This chain is Phosphoribosyl isomerase A, found in Streptomyces griseus subsp. griseus (strain JCM 4626 / CBS 651.72 / NBRC 13350 / KCC S-0626 / ISP 5235).